Here is a 1677-residue protein sequence, read N- to C-terminus: Zinc finger protein 831 (1677 aa).

Residues 1 to 26 (MEVPEPTCPAPPARDQPAPTPGPPGA) show a composition bias toward pro residues. Residues 1–43 (MEVPEPTCPAPPARDQPAPTPGPPGAPGGQASPHLTLGPVLLP) form a disordered region. 2 consecutive C2H2-type zinc fingers follow at residues 144-166 (YLCP…IRSH) and 172-196 (FPCA…TQTH). Disordered regions lie at residues 193–250 (TQTH…SPGA), 270–398 (GSAF…AGLE), 516–557 (WLEP…PSGH), 663–931 (EAAG…VLSA), 950–1062 (TPLP…TCEA), 1100–1119 (NWEL…SGPL), 1137–1176 (LTRP…PFPS), 1216–1243 (LRDE…GPAQ), 1510–1597 (SAES…GQYG), and 1620–1677 (LITR…VIEI). Composition is skewed to basic and acidic residues over residues 216–232 (EGDK…RGES) and 325–341 (KPWD…KCES). Over residues 376–385 (EGGPGPGPGV) the composition is skewed to gly residues. Positions 391 to 423 (GAREAGLELEKKRLEERIAQLISHNQAVVDDAQ) form a coiled coil. 4 stretches are compositionally biased toward basic and acidic residues: residues 517–526 (LEPREPRDPW), 674–684 (QDRRTPVHEDI), 707–727 (PTKH…RVEE), and 813–834 (SGED…HSWK). Low complexity-rich tracts occupy residues 880-894 (LESS…SVAL) and 905-919 (PLHP…HPSL). Low complexity predominate over residues 1153-1170 (SSHSGTSRSHSTRSPHST). A compositionally biased stretch (polar residues) spans 1518 to 1531 (QTAGRTLTSSSPDS). A compositionally biased stretch (basic and acidic residues) spans 1649–1662 (RSLEGMRKQTRVEF).

The sequence is that of Zinc finger protein 831 (ZNF831) from Homo sapiens (Human).